Consider the following 161-residue polypeptide: Regulator of ribonuclease activity A (161 aa).

It belongs to the RraA family. Homotrimer. Binds to both RNA-binding sites in the C-terminal region of Rne and to RhlB.

Its subcellular location is the cytoplasm. In terms of biological role, globally modulates RNA abundance by binding to RNase E (Rne) and regulating its endonucleolytic activity. Can modulate Rne action in a substrate-dependent manner by altering the composition of the degradosome. Modulates RNA-binding and helicase activities of the degradosome. The chain is Regulator of ribonuclease activity A from Cronobacter sakazakii (strain ATCC BAA-894) (Enterobacter sakazakii).